Reading from the N-terminus, the 215-residue chain is Cytochrome b6 (215 aa).

Residues 32–52 traverse the membrane as a helical segment; that stretch reads IFYCLGGITLTCFLVQVATGF. Residue Cys-35 coordinates heme c. Heme b is bound by residues His-86 and His-100. A run of 3 helical transmembrane segments spans residues 90 to 110, 116 to 136, and 186 to 206; these read ASMM…TGGF, LTWV…VTGY, and LHTF…FPMI. The heme b site is built by His-187 and His-202.

The protein belongs to the cytochrome b family. PetB subfamily. The 4 large subunits of the cytochrome b6-f complex are cytochrome b6, subunit IV (17 kDa polypeptide, PetD), cytochrome f and the Rieske protein, while the 4 small subunits are PetG, PetL, PetM and PetN. The complex functions as a dimer. The cofactor is heme b. Heme c is required as a cofactor.

It localises to the plastid. Its subcellular location is the chloroplast thylakoid membrane. Its function is as follows. Component of the cytochrome b6-f complex, which mediates electron transfer between photosystem II (PSII) and photosystem I (PSI), cyclic electron flow around PSI, and state transitions. The polypeptide is Cytochrome b6 (Nicotiana tomentosiformis (Tobacco)).